Reading from the N-terminus, the 156-residue chain is Methylated-DNA--protein-cysteine methyltransferase (156 aa).

Catalysis depends on Cys120, which acts as the Nucleophile; methyl group acceptor.

It belongs to the MGMT family.

It is found in the cytoplasm. The enzyme catalyses a 6-O-methyl-2'-deoxyguanosine in DNA + L-cysteinyl-[protein] = S-methyl-L-cysteinyl-[protein] + a 2'-deoxyguanosine in DNA. The catalysed reaction is a 4-O-methyl-thymidine in DNA + L-cysteinyl-[protein] = a thymidine in DNA + S-methyl-L-cysteinyl-[protein]. Functionally, involved in the cellular defense against the biological effects of O6-methylguanine (O6-MeG) and O4-methylthymine (O4-MeT) in DNA. Repairs the methylated nucleobase in DNA by stoichiometrically transferring the methyl group to a cysteine residue in the enzyme. This is a suicide reaction: the enzyme is irreversibly inactivated. In Sulfurisphaera tokodaii (strain DSM 16993 / JCM 10545 / NBRC 100140 / 7) (Sulfolobus tokodaii), this protein is Methylated-DNA--protein-cysteine methyltransferase.